Reading from the N-terminus, the 273-residue chain is Dermonecrotic toxin LhSicTox-alphaIA2avi (273 aa).

The active site involves H5. Mg(2+)-binding residues include E25 and D27. Residue H41 is the Nucleophile of the active site. Intrachain disulfides connect C45–C51 and C47–C190. Residue D85 participates in Mg(2+) binding.

Belongs to the arthropod phospholipase D family. Class II subfamily. The cofactor is Mg(2+). In terms of tissue distribution, expressed by the venom gland.

It is found in the secreted. It carries out the reaction an N-(acyl)-sphingosylphosphocholine = an N-(acyl)-sphingosyl-1,3-cyclic phosphate + choline. The catalysed reaction is an N-(acyl)-sphingosylphosphoethanolamine = an N-(acyl)-sphingosyl-1,3-cyclic phosphate + ethanolamine. It catalyses the reaction a 1-acyl-sn-glycero-3-phosphocholine = a 1-acyl-sn-glycero-2,3-cyclic phosphate + choline. The enzyme catalyses a 1-acyl-sn-glycero-3-phosphoethanolamine = a 1-acyl-sn-glycero-2,3-cyclic phosphate + ethanolamine. Functionally, dermonecrotic toxins cleave the phosphodiester linkage between the phosphate and headgroup of certain phospholipids (sphingolipid and lysolipid substrates), forming an alcohol (often choline) and a cyclic phosphate. This toxin acts on sphingomyelin (SM). It may also act on ceramide phosphoethanolamine (CPE), lysophosphatidylcholine (LPC) and lysophosphatidylethanolamine (LPE), but not on lysophosphatidylserine (LPS), and lysophosphatidylglycerol (LPG). It acts by transphosphatidylation, releasing exclusively cyclic phosphate products as second products. Induces dermonecrosis, hemolysis, increased vascular permeability, edema, inflammatory response, and platelet aggregation. The sequence is that of Dermonecrotic toxin LhSicTox-alphaIA2avi from Loxosceles hirsuta (Recluse spider).